The following is a 362-amino-acid chain: Hydroxycarboxylate dehydrogenase A (362 aa).

Asp173, His257, and His274 together coordinate Zn(2+).

Belongs to the iron-containing alcohol dehydrogenase family. The cofactor is Zn(2+).

It carries out the reaction 2-hydroxybutanoate + NADP(+) = 2-oxobutanoate + NADPH + H(+). The enzyme catalyses 2-hydroxyglutarate + NADP(+) = 2-oxoglutarate + NADPH + H(+). In terms of biological role, catalyzes the NADPH-dependent reduction of 2-oxoglutarate and 2-oxobutanoate, leading to the respective 2-hydroxycarboxylate. Cannot use NADH instead of NADPH as a redox partner. Do not catalyze the reverse reactions. The polypeptide is Hydroxycarboxylate dehydrogenase A (Escherichia coli (strain K12)).